The sequence spans 444 residues: Tol-Pal system protein TolB (444 aa).

An N-terminal signal peptide occupies residues Met-1–Ala-26. The span at Ala-287–Gly-310 shows a compositional bias: polar residues. A disordered region spans residues Ala-287 to Ser-311.

This sequence belongs to the TolB family. The Tol-Pal system is composed of five core proteins: the inner membrane proteins TolA, TolQ and TolR, the periplasmic protein TolB and the outer membrane protein Pal. They form a network linking the inner and outer membranes and the peptidoglycan layer.

The protein resides in the periplasm. Part of the Tol-Pal system, which plays a role in outer membrane invagination during cell division and is important for maintaining outer membrane integrity. This is Tol-Pal system protein TolB from Cereibacter sphaeroides (strain ATCC 17025 / ATH 2.4.3) (Rhodobacter sphaeroides).